The sequence spans 298 residues: Pyridoxal kinase PdxY (298 aa).

Substrate is bound at residue Ser-17. ATP contacts are provided by Asp-119 and Glu-156. Asp-234 serves as a coordination point for substrate.

The protein belongs to the pyridoxine kinase family. PdxY subfamily. As to quaternary structure, homodimer. Mg(2+) is required as a cofactor.

The enzyme catalyses pyridoxal + ATP = pyridoxal 5'-phosphate + ADP + H(+). It functions in the pathway cofactor metabolism; pyridoxal 5'-phosphate salvage; pyridoxal 5'-phosphate from pyridoxal: step 1/1. Pyridoxal kinase involved in the salvage pathway of pyridoxal 5'-phosphate (PLP). Catalyzes the phosphorylation of pyridoxal to PLP. In Deinococcus radiodurans (strain ATCC 13939 / DSM 20539 / JCM 16871 / CCUG 27074 / LMG 4051 / NBRC 15346 / NCIMB 9279 / VKM B-1422 / R1), this protein is Pyridoxal kinase PdxY.